A 412-amino-acid chain; its full sequence is TAASSAFFPVPSADTSSRPGKLGNGPSSFSPLKPKSIPNGGLQVKASASAPPKINGSSVGLKSGGLKTHDDAPSAPPPRTFINQLPDWSMLLAAITTAFLAAEKQWMMLDRKPKRLDMLEDPFGLGRVVQDGLVFRQNFSIRSYEIGADRTASIETVMNHLQETALNHVKTAGLSNDGFGRTPEMYKRDLIWVVAKMQVMVNRYPTWGDTVEVNTWVAKSGKNGMRRDWLISDCNTGEILTRASSVWVMMNQKTRKLSKIPDEVRREIEPHFVDSAPVIEDDDRKLPKLDEKSADSIRKGLTPRWNDLDVNQHVNNAKYIGWILESTPPEVLETQELCSLTLEYRRECGRESVLESLTAVDPSGEGYGSQFQHLLRLEDGGEIVKGRTEWRPKNAGINGVVPSEESSPGDYS.

2 stretches are compositionally biased toward low complexity: residues Thr-1–Ala-13 and Gly-56–Leu-66. A chloroplast-targeting transit peptide spans Thr-1 to Ala-46. The interval Thr-1–Pro-78 is disordered. Active-site residues include Asn-311, His-313, and Cys-348.

This sequence belongs to the acyl-ACP thioesterase family.

The protein resides in the plastid. It localises to the chloroplast. It carries out the reaction tetradecanoyl-[ACP] + H2O = tetradecanoate + holo-[ACP] + H(+). It catalyses the reaction hexadecanoyl-[ACP] + H2O = hexadecanoate + holo-[ACP] + H(+). Its function is as follows. Plays an essential role in chain termination during de novo fatty acid synthesis. Possesses thioesterase activity for medium chain acyl-ACPs. Substrate preference is 14:0 &gt; 16:0 &gt; 16:1. In Cuphea viscosissima (Blue waxweed), this protein is Acyl-[acyl-carrier-protein] hydrolase FATB2, chloroplastic.